Consider the following 301-residue polypeptide: Acetyl-coenzyme A carboxylase carboxyl transferase subunit beta (301 aa).

Residues 25-294 enclose the CoA carboxyltransferase N-terminal domain; the sequence is LWIKDPSTGE…NSDAPEHEKT (270 aa). A disordered region spans residues 282–301; that stretch reads QPGNSDAPEHEKTEATDKAA. Residues 288–301 are compositionally biased toward basic and acidic residues; the sequence is APEHEKTEATDKAA.

The protein belongs to the AccD/PCCB family. In terms of assembly, acetyl-CoA carboxylase is a heterohexamer composed of biotin carboxyl carrier protein (AccB), biotin carboxylase (AccC) and two subunits each of ACCase subunit alpha (AccA) and ACCase subunit beta (AccD).

Its subcellular location is the cytoplasm. It carries out the reaction N(6)-carboxybiotinyl-L-lysyl-[protein] + acetyl-CoA = N(6)-biotinyl-L-lysyl-[protein] + malonyl-CoA. The protein operates within lipid metabolism; malonyl-CoA biosynthesis; malonyl-CoA from acetyl-CoA: step 1/1. In terms of biological role, component of the acetyl coenzyme A carboxylase (ACC) complex. Biotin carboxylase (BC) catalyzes the carboxylation of biotin on its carrier protein (BCCP) and then the CO(2) group is transferred by the transcarboxylase to acetyl-CoA to form malonyl-CoA. The protein is Acetyl-coenzyme A carboxylase carboxyl transferase subunit beta of Brucella anthropi (strain ATCC 49188 / DSM 6882 / CCUG 24695 / JCM 21032 / LMG 3331 / NBRC 15819 / NCTC 12168 / Alc 37) (Ochrobactrum anthropi).